The sequence spans 285 residues: Probable enoyl-CoA hydratase echA12 (285 aa).

Belongs to the enoyl-CoA hydratase/isomerase family.

It catalyses the reaction a (3S)-3-hydroxyacyl-CoA = a (2E)-enoyl-CoA + H2O. It carries out the reaction a 4-saturated-(3S)-3-hydroxyacyl-CoA = a (3E)-enoyl-CoA + H2O. Functionally, could possibly oxidize fatty acids using specific components. This is Probable enoyl-CoA hydratase echA12 (echA12) from Mycobacterium tuberculosis (strain CDC 1551 / Oshkosh).